The following is a 559-amino-acid chain: MAFSLSENPRLLNCLDSDIPALSTCSNADTFSRMNTMLGNSLDLSGVCTTPTAKCKRDPFNGRPDSDLSAVRSRMLFLSGGQDSSRGLPDVSNWGLGLQSLSLSDWERPWSSHDSDPSAQTNTASLHGILGTPSHLSNRLPSYSEPSIGATDFLERFPGMARLNSQSFLDSHSISPVDSETSGFSSGSDHLSDLLSSLRISPSVPFLMSSMQRDPLKLALGSRLDHSSSPLTPPPSATSSGGLSHRWPGASIWPNWDLMKTPESPFSIEREAWLHRQAASINEATFTWSGQLPPRHYQNPIYSCKVFLGGVPWDITEAGLINTFKCYGPLSVEWPGKDGKHPRCPPKGNMPKGYVYLVFESDKSVRALLQDCTEDLLHPEGYSEYYFKMSSRRMRCKDAQVIPWVISDSNYVSCPSQRLDPRNTVFVGALHGMLNAEALASIMNDLFGGVVYAGIDTDKHKYPIGSGRVTFNNQRSYLKAVSAAFVEIKTPKFTKKVQIDPYLEDAICQSCSREPGPFFCRDKTCFKYYCRSCWHRQHSMDILSNHRPLMRNQKKRDVN.

The segment at 223-244 is disordered; the sequence is RLDHSSSPLTPPPSATSSGGLS. 2 consecutive RRM domains span residues 304-401 and 423-504; these read CKVF…DAQV and NTVF…PYLE. The Zn(2+) site is built by cysteine 508, cysteine 511, cysteine 520, cysteine 525, cysteine 530, cysteine 533, histidine 538, and histidine 546.

It belongs to the RRM CPEB family. As to quaternary structure, interacts with kinesin, dynein, APLP1, APLP2, TENT2/GLD2 and APP. Both phosphorylated and non phosphorylated forms interact with APLP1. Interacts with TENT4B; the interaction is required for TENT4B-mediated translational control.

Its subcellular location is the cytoplasm. Its function is as follows. Sequence-specific RNA-binding protein that regulates mRNA cytoplasmic polyadenylation and translation initiation during oocyte maturation and early development. Binds to the cytoplasmic polyadenylation element (CPE), an uridine-rich sequence element (consensus sequence 5'-UUUUUAU-3') within the mRNA 3'-UTR. The protein is Cytoplasmic polyadenylation element-binding protein 1 (cpeb1) of Carassius auratus (Goldfish).